Reading from the N-terminus, the 437-residue chain is Lipid II isoglutaminyl synthase (glutamine-hydrolyzing) subunit MurT (437 aa).

Residues cysteine 202, cysteine 205, cysteine 224, and cysteine 226 each contribute to the Zn(2+) site. Residue aspartate 349 is part of the active site.

It belongs to the MurCDEF family. MurT subfamily. In terms of assembly, forms a heterodimer with GatD.

It catalyses the reaction beta-D-GlcNAc-(1-&gt;4)-Mur2Ac(oyl-L-Ala-gamma-D-Glu-L-Lys-D-Ala-D-Ala)-di-trans,octa-cis-undecaprenyl diphosphate + L-glutamine + ATP + H2O = beta-D-GlcNAc-(1-&gt;4)-Mur2Ac(oyl-L-Ala-D-isoglutaminyl-L-Lys-D-Ala-D-Ala)-di-trans,octa-cis-undecaprenyl diphosphate + L-glutamate + ADP + phosphate + H(+). The catalysed reaction is beta-D-GlcNAc-(1-&gt;4)-Mur2Ac(oyl-L-Ala-gamma-D-Glu-L-Lys-D-Ala-D-Ala)-di-trans,octa-cis-undecaprenyl diphosphate + ATP = beta-D-GlcNAc-(1-&gt;4)-Mur2Ac(oyl-L-Ala-gamma-D-O-P-Glu-L-Lys-D-Ala-D-Ala)-di-trans,octa-cis-undecaprenyl diphosphate + ADP. It carries out the reaction beta-D-GlcNAc-(1-&gt;4)-Mur2Ac(oyl-L-Ala-gamma-D-O-P-Glu-L-Lys-D-Ala-D-Ala)-di-trans,octa-cis-undecaprenyl diphosphate + NH4(+) = beta-D-GlcNAc-(1-&gt;4)-Mur2Ac(oyl-L-Ala-D-isoglutaminyl-L-Lys-D-Ala-D-Ala)-di-trans,octa-cis-undecaprenyl diphosphate + phosphate + H(+). The protein operates within cell wall biogenesis; peptidoglycan biosynthesis. Functionally, the lipid II isoglutaminyl synthase complex catalyzes the formation of alpha-D-isoglutamine in the cell wall lipid II stem peptide. The MurT subunit catalyzes the ATP-dependent amidation of D-glutamate residue of lipid II, converting it to an isoglutamine residue. The chain is Lipid II isoglutaminyl synthase (glutamine-hydrolyzing) subunit MurT from Staphylococcus aureus (strain N315).